Here is a 179-residue protein sequence, read N- to C-terminus: 6,7-dimethyl-8-ribityllumazine synthase (179 aa).

5-amino-6-(D-ribitylamino)uracil contacts are provided by residues W13, 45-47 (AVE), and 68-70 (VVI). Position 73 to 74 (73 to 74 (DT)) interacts with (2S)-2-hydroxy-3-oxobutyl phosphate. Catalysis depends on H76, which acts as the Proton donor. F101 is a 5-amino-6-(D-ribitylamino)uracil binding site. R115 contributes to the (2S)-2-hydroxy-3-oxobutyl phosphate binding site. Positions 157–179 (AKAAKKPAKAAAKTQKKKKKVRK) are disordered.

Belongs to the DMRL synthase family.

The catalysed reaction is (2S)-2-hydroxy-3-oxobutyl phosphate + 5-amino-6-(D-ribitylamino)uracil = 6,7-dimethyl-8-(1-D-ribityl)lumazine + phosphate + 2 H2O + H(+). It functions in the pathway cofactor biosynthesis; riboflavin biosynthesis; riboflavin from 2-hydroxy-3-oxobutyl phosphate and 5-amino-6-(D-ribitylamino)uracil: step 1/2. In terms of biological role, catalyzes the formation of 6,7-dimethyl-8-ribityllumazine by condensation of 5-amino-6-(D-ribitylamino)uracil with 3,4-dihydroxy-2-butanone 4-phosphate. This is the penultimate step in the biosynthesis of riboflavin. The chain is 6,7-dimethyl-8-ribityllumazine synthase from Bdellovibrio bacteriovorus (strain ATCC 15356 / DSM 50701 / NCIMB 9529 / HD100).